The primary structure comprises 171 residues: Endoribonuclease YbeY (171 aa).

3 residues coordinate Zn(2+): H126, H130, and H136.

It belongs to the endoribonuclease YbeY family. It depends on Zn(2+) as a cofactor.

The protein localises to the cytoplasm. In terms of biological role, single strand-specific metallo-endoribonuclease involved in late-stage 70S ribosome quality control and in maturation of the 3' terminus of the 16S rRNA. The chain is Endoribonuclease YbeY from Rhizobium etli (strain CIAT 652).